Reading from the N-terminus, the 320-residue chain is Olfactory receptor 12D1 (320 aa).

Over 1-23 (MLNTTSVTEFLLLGVTDIQELQP) the chain is Extracellular. Asparagine 3 carries an N-linked (GlcNAc...) asparagine glycan. The helical transmembrane segment at 24 to 44 (FLFVVFLTIYFISVAGNGAIL) threads the bilayer. Topologically, residues 45–55 (MIVISDPRLHS) are cytoplasmic. A helical transmembrane segment spans residues 56–76 (PMYFFLGNLSCLDICYSSVTL). Residues 77 to 97 (PKMLQNFLSAHKAISFLGCIS) lie on the Extracellular side of the membrane. The cysteines at positions 95 and 177 are disulfide-linked. The helical transmembrane segment at 98–118 (QLHFFHFLGSTEAMLLAVMAF) threads the bilayer. At 119–141 (DRFVAICKPLRYTVIMNPQLCTQ) the chain is on the cytoplasmic side. Residues 142 to 162 (MAITIWMIGFFHALLHSLMTS) form a helical membrane-spanning segment. The Extracellular portion of the chain corresponds to 163–203 (RLNFCGSNRIYHFFCDVKPLLKLACGNTELNQWLLSTVTGT). Residues 204–224 (IAMGPFFLTLLSYFYIITHLF) traverse the membrane as a helical segment. Residues 225–238 (FKTHSFSMLRKALS) lie on the Cytoplasmic side of the membrane. Residues 239-259 (TCASHFMVVILLYAPVLFTYI) form a helical membrane-spanning segment. The Extracellular portion of the chain corresponds to 260-270 (HHASGTSMDQD). A helical transmembrane segment spans residues 271-291 (RITAIMYTVVTPVLNPLIYTL). Residues 292–320 (RNKEVKGAFNRAMKRWLWPKEILKNSSEA) are Cytoplasmic-facing.

This sequence belongs to the G-protein coupled receptor 1 family.

The protein localises to the cell membrane. In terms of biological role, odorant receptor. The chain is Olfactory receptor 12D1 (OR12D1) from Homo sapiens (Human).